Here is a 508-residue protein sequence, read N- to C-terminus: Photosystem II CP47 reaction center protein (508 aa).

The next 6 membrane-spanning stretches (helical) occupy residues 21–36 (SVHI…WAGS), 101–115 (IVFS…IWHW), 140–156 (GIHL…FGAF), 203–218 (IAAG…FHLS), 237–252 (VLSS…AFVV), and 457–472 (SFAL…HGAR).

Belongs to the PsbB/PsbC family. PsbB subfamily. In terms of assembly, PSII is composed of 1 copy each of membrane proteins PsbA, PsbB, PsbC, PsbD, PsbE, PsbF, PsbH, PsbI, PsbJ, PsbK, PsbL, PsbM, PsbT, PsbX, PsbY, PsbZ, Psb30/Ycf12, at least 3 peripheral proteins of the oxygen-evolving complex and a large number of cofactors. It forms dimeric complexes. Binds multiple chlorophylls. PSII binds additional chlorophylls, carotenoids and specific lipids. is required as a cofactor.

The protein localises to the plastid. Its subcellular location is the chloroplast thylakoid membrane. Functionally, one of the components of the core complex of photosystem II (PSII). It binds chlorophyll and helps catalyze the primary light-induced photochemical processes of PSII. PSII is a light-driven water:plastoquinone oxidoreductase, using light energy to abstract electrons from H(2)O, generating O(2) and a proton gradient subsequently used for ATP formation. The polypeptide is Photosystem II CP47 reaction center protein (Eucalyptus globulus subsp. globulus (Tasmanian blue gum)).